The following is a 110-amino-acid chain: Phosphoribosyl-ATP pyrophosphatase (110 aa).

This sequence belongs to the PRA-PH family.

It is found in the cytoplasm. It catalyses the reaction 1-(5-phospho-beta-D-ribosyl)-ATP + H2O = 1-(5-phospho-beta-D-ribosyl)-5'-AMP + diphosphate + H(+). It functions in the pathway amino-acid biosynthesis; L-histidine biosynthesis; L-histidine from 5-phospho-alpha-D-ribose 1-diphosphate: step 2/9. This is Phosphoribosyl-ATP pyrophosphatase from Pseudomonas syringae pv. syringae (strain B728a).